We begin with the raw amino-acid sequence, 281 residues long: Acetyl-coenzyme A carboxylase carboxyl transferase subunit beta (281 aa).

Residues I23 to N281 form the CoA carboxyltransferase N-terminal domain. Residues C27, C30, C46, and C49 each contribute to the Zn(2+) site. The C4-type zinc-finger motif lies at C27 to C49.

It belongs to the AccD/PCCB family. Acetyl-CoA carboxylase is a heterohexamer composed of biotin carboxyl carrier protein (AccB), biotin carboxylase (AccC) and two subunits each of ACCase subunit alpha (AccA) and ACCase subunit beta (AccD). Zn(2+) is required as a cofactor.

It is found in the cytoplasm. The enzyme catalyses N(6)-carboxybiotinyl-L-lysyl-[protein] + acetyl-CoA = N(6)-biotinyl-L-lysyl-[protein] + malonyl-CoA. It participates in lipid metabolism; malonyl-CoA biosynthesis; malonyl-CoA from acetyl-CoA: step 1/1. Functionally, component of the acetyl coenzyme A carboxylase (ACC) complex. Biotin carboxylase (BC) catalyzes the carboxylation of biotin on its carrier protein (BCCP) and then the CO(2) group is transferred by the transcarboxylase to acetyl-CoA to form malonyl-CoA. The sequence is that of Acetyl-coenzyme A carboxylase carboxyl transferase subunit beta from Alteromonas mediterranea (strain DSM 17117 / CIP 110805 / LMG 28347 / Deep ecotype).